The sequence spans 177 residues: UPF0114 protein HPAG1_0183 (177 aa).

4 helical membrane passes run 15–35, 54–74, 102–122, and 145–165; these read WLLA…GYVF, LVLS…VLMV, FNAL…IFLL, and PIFW…LAAV.

The protein belongs to the UPF0114 family.

Its subcellular location is the cell membrane. This chain is UPF0114 protein HPAG1_0183, found in Helicobacter pylori (strain HPAG1).